Reading from the N-terminus, the 357-residue chain is Peptide chain release factor 1 (357 aa).

Q234 bears the N5-methylglutamine mark. Residues K284 to R307 are compositionally biased toward basic and acidic residues. A disordered region spans residues K284–Q313.

It belongs to the prokaryotic/mitochondrial release factor family. Methylated by PrmC. Methylation increases the termination efficiency of RF1.

It is found in the cytoplasm. Peptide chain release factor 1 directs the termination of translation in response to the peptide chain termination codons UAG and UAA. The polypeptide is Peptide chain release factor 1 (Borrelia turicatae (strain 91E135)).